The following is a 355-amino-acid chain: MAEQMVFDADQVTAEVAEGIEKIQNASNLEELKAIKTTYAGADSAMTKASKAIGSLPADQKKEAGKLMGKLRADFGRAYGPKEVELKEAAEKAALAAETVDMTLPVSRKPLGARHPLPKLMEDVEDFFISMGWQISSGPEIEAEWYNFDSLNFGPDHPARQMQDTFYVKGNQAKDAAGFVGSNMVVRTQTSSDQVRALLTRGVPLYIASPGRVFRTDELDATHTPVFHQCEALAVDKHLTMADLKGVLDKLAVAMFGPEAKTRLRPSYFPFTEPSAELDLWFPDKKGGPGWLEWGGCGMVNPNVLKSAGIDPDVYTGFAFGVGMERTLLLRSDINDMHDLVEGDVRFAEQFVMGE.

Residue glutamate 273 coordinates Mg(2+).

It belongs to the class-II aminoacyl-tRNA synthetase family. Phe-tRNA synthetase alpha subunit type 1 subfamily. Tetramer of two alpha and two beta subunits. Mg(2+) is required as a cofactor.

The protein resides in the cytoplasm. It catalyses the reaction tRNA(Phe) + L-phenylalanine + ATP = L-phenylalanyl-tRNA(Phe) + AMP + diphosphate + H(+). This is Phenylalanine--tRNA ligase alpha subunit from Bifidobacterium longum (strain NCC 2705).